Consider the following 391-residue polypeptide: Na(+)/H(+) antiporter NhaA (391 aa).

Helical transmembrane passes span Ala14–Leu34, Phe47–Ile67, Ile87–Phe107, Gly117–Gly137, Val146–Phe166, Leu171–Ala191, Ala205–Ile225, Val252–Val272, Met280–Phe300, Phe318–Ile338, and Leu356–Ser376.

It belongs to the NhaA Na(+)/H(+) (TC 2.A.33) antiporter family.

The protein resides in the cell inner membrane. The catalysed reaction is Na(+)(in) + 2 H(+)(out) = Na(+)(out) + 2 H(+)(in). Its function is as follows. Na(+)/H(+) antiporter that extrudes sodium in exchange for external protons. The chain is Na(+)/H(+) antiporter NhaA from Vibrio campbellii (strain ATCC BAA-1116).